The primary structure comprises 265 residues: Small ribosomal subunit protein eS1 (265 aa).

Disordered regions lie at residues 1–24 and 240–265; these read MTQG…RTID and HEKK…LLAQ. Over residues 240 to 253 the composition is skewed to basic and acidic residues; it reads HEKKGEKATGRDGA.

This sequence belongs to the eukaryotic ribosomal protein eS1 family. In terms of assembly, component of the small ribosomal subunit. Mature ribosomes consist of a small (40S) and a large (60S) subunit. The 40S subunit contains about 33 different proteins and 1 molecule of RNA (18S). The 60S subunit contains about 49 different proteins and 3 molecules of RNA (25S, 5.8S and 5S).

Its subcellular location is the cytoplasm. The sequence is that of Small ribosomal subunit protein eS1 from Tetrahymena thermophila (strain SB210).